The sequence spans 123 residues: Pre-B lymphocyte protein 3 (123 aa).

The first 20 residues, 1 to 20 (MACRCLSFLLMGTFLSVSQT), serve as a signal peptide directing secretion. In terms of domain architecture, Ig-like spans 21 to 123 (VLAQLDALLV…YCSVGYGFSP (103 aa)). Cysteine 40 and cysteine 115 are joined by a disulfide.

The protein belongs to the immunoglobulin superfamily. Expressed in B-cell precursors. Expressed in fetal liver, bone marrow, spleen and lymph node.

Functionally, associates with the Ig-mu chain to form a molecular complex that is expressed on the surface of pre-B-cells. This is Pre-B lymphocyte protein 3 (VPREB3) from Homo sapiens (Human).